We begin with the raw amino-acid sequence, 162 residues long: 2-amino-4-hydroxy-6-hydroxymethyldihydropteridine pyrophosphokinase (162 aa).

It belongs to the HPPK family.

The enzyme catalyses 6-hydroxymethyl-7,8-dihydropterin + ATP = (7,8-dihydropterin-6-yl)methyl diphosphate + AMP + H(+). It participates in cofactor biosynthesis; tetrahydrofolate biosynthesis; 2-amino-4-hydroxy-6-hydroxymethyl-7,8-dihydropteridine diphosphate from 7,8-dihydroneopterin triphosphate: step 4/4. In terms of biological role, catalyzes the transfer of pyrophosphate from adenosine triphosphate (ATP) to 6-hydroxymethyl-7,8-dihydropterin, an enzymatic step in folate biosynthesis pathway. This Streptococcus pyogenes serotype M3 (strain ATCC BAA-595 / MGAS315) protein is 2-amino-4-hydroxy-6-hydroxymethyldihydropteridine pyrophosphokinase (folK).